A 468-amino-acid chain; its full sequence is Probable Xaa-Pro aminopeptidase PEPP (468 aa).

Residues D264, D275, E398, and E438 each coordinate Mn(2+).

The protein belongs to the peptidase M24B family. Mn(2+) is required as a cofactor.

The enzyme catalyses Release of any N-terminal amino acid, including proline, that is linked to proline, even from a dipeptide or tripeptide.. Its function is as follows. Catalyzes the removal of a penultimate prolyl residue from the N-termini of peptides. In Ajellomyces dermatitidis (strain ER-3 / ATCC MYA-2586) (Blastomyces dermatitidis), this protein is Probable Xaa-Pro aminopeptidase PEPP (PEPP).